A 426-amino-acid polypeptide reads, in one-letter code: MLDNQLLRENPQYVATQLLKRGFQFDAVTFSQLEEKRKALQVSTQSLQNERNLRSKAIGEAKSRGENIEPMREEVNKLGAKLEQQKTELDEVLKQIEVISLSLPNIPHESVPVGKDELDNQEIRKWGDVPAFSFPVKSHDELGEALGQMDFALAAKITGSRFVVMKGHLARLHRALIQFMLDIHIQQHGYQEIYVPYIVNADSLLGTGQLPKFEADLFKLTGDNGYYLTSTSEIPVTNTVREMILSAEQLPIRYVCHSPCFRSEAGSYGKDTKGMIRQHQFEKVELVWITKPEDSYNALEQLTQHAEVILQRLNLPYRVVALCTGDIGAGSAKTYDLEVWLPSQNTYREISSCSNMEAFQARRMKARFRNPDTNEIQLVHTLNGSGLAVGRTLVAIMENYQDEHGNIHIPDALKPYLGGIDIISVK.

231 to 233 (TSE) provides a ligand contact to L-serine. 262 to 264 (RSE) lines the ATP pocket. L-serine is bound at residue Glu285. 349-352 (EISS) provides a ligand contact to ATP. Residue Ser385 participates in L-serine binding.

Belongs to the class-II aminoacyl-tRNA synthetase family. Type-1 seryl-tRNA synthetase subfamily. Homodimer. The tRNA molecule binds across the dimer.

The protein resides in the cytoplasm. The enzyme catalyses tRNA(Ser) + L-serine + ATP = L-seryl-tRNA(Ser) + AMP + diphosphate + H(+). It carries out the reaction tRNA(Sec) + L-serine + ATP = L-seryl-tRNA(Sec) + AMP + diphosphate + H(+). It participates in aminoacyl-tRNA biosynthesis; selenocysteinyl-tRNA(Sec) biosynthesis; L-seryl-tRNA(Sec) from L-serine and tRNA(Sec): step 1/1. Functionally, catalyzes the attachment of serine to tRNA(Ser). Is also able to aminoacylate tRNA(Sec) with serine, to form the misacylated tRNA L-seryl-tRNA(Sec), which will be further converted into selenocysteinyl-tRNA(Sec). The sequence is that of Serine--tRNA ligase from Legionella pneumophila (strain Corby).